A 486-amino-acid chain; its full sequence is MFAHTLFRKRCAIWLLAIGIFLMLGSCAEKPSELERIKEEGVLRVITRNSPSTYFQDRNGEAGFEYELVKRFASTLGVELQIETADNIDDIFSRLNRPGGPALAAAGLVASEGRQELARFTRSYLDVTTQVVYHSGQRRPTSPKDLIGKRILVLKGSSQAEKLASLQVEYPELRYDESDAVEVVDLLRMVDEGQIDLTLVESNEMSMNQVYFSNIRAGFDVGEQNSLAWVVAKGEDDSLLKAADAFLEQAQQNGTLQRLRERYYGHVDVLGYVGAYAFAKHLQQRLPRYEKAFRETAKEHGIDWRLLAAIGYQESHWQPEATSKTGVRGLMMLTLRTANAMGVTNRLDPVQSIQGGGKYLVQVHASLPESIEEPDRTWFALAAYNVGGGHLEDARKLAEAEGLDPNKWLDVKQMLPRLSQKQWYSKTRYGYARGGEPVHFVANIRRYYDILTWVTQPQMEGQQLAKSELHIPGINSTDLMEELPPL.

Positions 1–28 (MFAHTLFRKRCAIWLLAIGIFLMLGSCA) are cleaved as a signal peptide. Residues 29 to 267 (EKPSELERIK…RLRERYYGHV (239 aa)) are non-LT domain. Residues 268-486 (DVLGYVGAYA…TDLMEELPPL (219 aa)) are LT domain. The active site involves Glu314.

It in the N-terminal section; belongs to the bacterial solute-binding protein 3 family. In the C-terminal section; belongs to the transglycosylase Slt family.

The protein resides in the cell outer membrane. The catalysed reaction is Exolytic cleavage of the (1-&gt;4)-beta-glycosidic linkage between N-acetylmuramic acid (MurNAc) and N-acetylglucosamine (GlcNAc) residues in peptidoglycan, from either the reducing or the non-reducing ends of the peptidoglycan chains, with concomitant formation of a 1,6-anhydrobond in the MurNAc residue.. Murein-degrading enzyme that degrades murein glycan strands and insoluble, high-molecular weight murein sacculi, with the concomitant formation of a 1,6-anhydromuramoyl product. Lytic transglycosylases (LTs) play an integral role in the metabolism of the peptidoglycan (PG) sacculus. Their lytic action creates space within the PG sacculus to allow for its expansion as well as for the insertion of various structures such as secretion systems and flagella. The protein is Membrane-bound lytic murein transglycosylase F of Stutzerimonas stutzeri (strain A1501) (Pseudomonas stutzeri).